We begin with the raw amino-acid sequence, 82 residues long: Small ribosomal subunit protein bS16 (82 aa).

It belongs to the bacterial ribosomal protein bS16 family.

The polypeptide is Small ribosomal subunit protein bS16 (Photorhabdus laumondii subsp. laumondii (strain DSM 15139 / CIP 105565 / TT01) (Photorhabdus luminescens subsp. laumondii)).